A 303-amino-acid polypeptide reads, in one-letter code: MIIDVNTPIPFRLDKYLKRLYPSLTQGVIEKALRQKQVTVNFQKAEANLRVKEGDTIFINDYFNLPVTQHETLVFADAEIKLAKKILTDYLIYEDDHLIAINKPASLATQGGSKINLSIDSALKYLNYQGADFKLVHRLDKETSGLLLIAKNYLSSVKLHDAFKEKLVIKKYFAITYGRPVKNVGIVKSNIGKSKGRMFKITDIDSDNGKLAITYYKLLKSLNNNLFLIEFMPVTGRMHQLRLHAQLLGCPILGDDKYGNKEVMPYSKYMFLHANNIYLSESIVGKEIKLEAKLPFYFTRRLT.

Residues 11–70 (FRLDKYLKRLYPSLTQGVIEKALRQKQVTVNFQKAEANLRVKEGDTIFINDYFNLPVTQH) enclose the S4 RNA-binding domain. Aspartate 140 is a catalytic residue.

Belongs to the pseudouridine synthase RluA family.

It carries out the reaction uridine(955/2504/2580) in 23S rRNA = pseudouridine(955/2504/2580) in 23S rRNA. Its function is as follows. Responsible for synthesis of pseudouridine from uracil at positions 955, 2504 and 2580 in 23S ribosomal RNA. The chain is Ribosomal large subunit pseudouridine synthase C (rluC) from Rickettsia typhi (strain ATCC VR-144 / Wilmington).